The chain runs to 241 residues: DNA repair protein RecO (241 aa).

This sequence belongs to the RecO family.

In terms of biological role, involved in DNA repair and RecF pathway recombination. This chain is DNA repair protein RecO, found in Ruegeria sp. (strain TM1040) (Silicibacter sp.).